The chain runs to 282 residues: Bis(5'-nucleosyl)-tetraphosphatase, symmetrical (282 aa).

This sequence belongs to the Ap4A hydrolase family.

It carries out the reaction P(1),P(4)-bis(5'-adenosyl) tetraphosphate + H2O = 2 ADP + 2 H(+). Its function is as follows. Hydrolyzes diadenosine 5',5'''-P1,P4-tetraphosphate to yield ADP. The protein is Bis(5'-nucleosyl)-tetraphosphatase, symmetrical of Sodalis glossinidius (strain morsitans).